Here is a 219-residue protein sequence, read N- to C-terminus: Histone H1.11R (219 aa).

Composition is skewed to low complexity over residues 1–20 (MAET…AAKA) and 28–40 (AAGG…PAGP). Disordered stretches follow at residues 1-42 (MAET…GPSV) and 89-219 (LVSK…AKKK). Positions 38–111 (AGPSVTELIT…GASGSFRLSK (74 aa)) constitute an H15 domain. Composition is skewed to basic residues over residues 121–135 (PKKK…KAAA), 143–160 (KKPK…KAKK), 168–183 (KSVK…KKAV), and 192–219 (KAVK…AKKK).

The protein belongs to the histone H1/H5 family.

It is found in the nucleus. The protein resides in the chromosome. Histones H1 are necessary for the condensation of nucleosome chains into higher-order structures. The protein is Histone H1.11R of Gallus gallus (Chicken).